Reading from the N-terminus, the 132-residue chain is DNA-directed RNA polymerase subunit omega (132 aa).

The disordered stretch occupies residues 76 to 105; sequence EVDEPEQDAASIAEGQLTSGSQDEDEMPET.

This sequence belongs to the RNA polymerase subunit omega family. In terms of assembly, the RNAP catalytic core consists of 2 alpha, 1 beta, 1 beta' and 1 omega subunit. When a sigma factor is associated with the core the holoenzyme is formed, which can initiate transcription.

The enzyme catalyses RNA(n) + a ribonucleoside 5'-triphosphate = RNA(n+1) + diphosphate. Promotes RNA polymerase assembly. Latches the N- and C-terminal regions of the beta' subunit thereby facilitating its interaction with the beta and alpha subunits. The polypeptide is DNA-directed RNA polymerase subunit omega (Allorhizobium ampelinum (strain ATCC BAA-846 / DSM 112012 / S4) (Agrobacterium vitis (strain S4))).